We begin with the raw amino-acid sequence, 603 residues long: Threonine--tRNA ligase (603 aa).

A catalytic region spans residues 197–499; the sequence is DHRKLGKELG…LIEEYAGDFP (303 aa). Residues C296, H347, and H476 each coordinate Zn(2+).

This sequence belongs to the class-II aminoacyl-tRNA synthetase family. Homodimer. Requires Zn(2+) as cofactor.

The protein resides in the cytoplasm. The catalysed reaction is tRNA(Thr) + L-threonine + ATP = L-threonyl-tRNA(Thr) + AMP + diphosphate + H(+). Its function is as follows. Catalyzes the attachment of threonine to tRNA(Thr) in a two-step reaction: L-threonine is first activated by ATP to form Thr-AMP and then transferred to the acceptor end of tRNA(Thr). Also edits incorrectly charged L-seryl-tRNA(Thr). This is Threonine--tRNA ligase from Synechocystis sp. (strain ATCC 27184 / PCC 6803 / Kazusa).